The following is a 459-amino-acid chain: Putrescine aminotransferase (459 aa).

Pyridoxal 5'-phosphate is bound by residues 150 to 151 and glutamine 274; that span reads GT. Residue lysine 300 is modified to N6-(pyridoxal phosphate)lysine. Threonine 332 contacts pyridoxal 5'-phosphate.

Belongs to the class-III pyridoxal-phosphate-dependent aminotransferase family. Putrescine aminotransferase subfamily. Pyridoxal 5'-phosphate is required as a cofactor.

The catalysed reaction is an alkane-alpha,omega-diamine + 2-oxoglutarate = an omega-aminoaldehyde + L-glutamate. It catalyses the reaction putrescine + 2-oxoglutarate = 1-pyrroline + L-glutamate + H2O. The enzyme catalyses cadaverine + 2-oxoglutarate = 5-aminopentanal + L-glutamate. The protein operates within amine and polyamine degradation; putrescine degradation; 4-aminobutanal from putrescine (transaminase route): step 1/1. Its function is as follows. Catalyzes the aminotransferase reaction from putrescine to 2-oxoglutarate, leading to glutamate and 4-aminobutanal, which spontaneously cyclizes to form 1-pyrroline. This is the first step in one of two pathways for putrescine degradation, where putrescine is converted into 4-aminobutanoate (gamma-aminobutyrate or GABA) via 4-aminobutanal. Also functions as a cadaverine transaminase in a a L-lysine degradation pathway to succinate that proceeds via cadaverine, glutarate and L-2-hydroxyglutarate. This Enterobacter sp. (strain 638) protein is Putrescine aminotransferase.